Here is a 57-residue protein sequence, read N- to C-terminus: Sec-independent protein translocase protein TatAy (57 aa).

The chain crosses the membrane as a helical span at residues 1–21 (MPIGPGSLAVIAIVALIIFGP).

The protein belongs to the TatA/E family. As to quaternary structure, forms a complex with TatCy. Two types of complexes exist: one composed of TatAy and TatCy, and another composed only of TatAy. Cytosolic TatA forms large complexes or aggregates.

The protein localises to the cell membrane. It is found in the cytoplasm. Its subcellular location is the cytosol. Functionally, part of the twin-arginine translocation (Tat) system that transports large folded proteins containing a characteristic twin-arginine motif in their signal peptide across membranes. TatA could form the protein-conducting channel of the Tat system. Required for YwbN secretion. The sequence is that of Sec-independent protein translocase protein TatAy from Bacillus subtilis (strain 168).